A 269-amino-acid polypeptide reads, in one-letter code: uncharacterized protein (269 aa).

103–110 (GIFTMGKS) is an ATP binding site.

This is an uncharacterized protein from Mycoplasma pneumoniae (strain ATCC 29342 / M129 / Subtype 1) (Mycoplasmoides pneumoniae).